The following is an 814-amino-acid chain: Protein kintoun (814 aa).

A compositionally biased stretch (low complexity) spans 234-246 (AANTARSPASPAP). Disordered stretches follow at residues 234–259 (AANTARSPASPAPEAVQRPEPTEPRC) and 357–490 (ARQE…MGDP). Basic and acidic residues predominate over residues 388–404 (AAREESADGTGADHGEK). Serine 444 and serine 618 each carry phosphoserine. A disordered region spans residues 654–686 (AGLQGKGKGVREGCPLSEAEAADQSATSPAASD). The span at 675 to 686 (ADQSATSPAASD) shows a compositional bias: low complexity.

It belongs to the PIH1 family. Kintoun subfamily. In terms of assembly, interacts with DNAI2 and HSPA1A. Interacts with CFAP300. Interacts with DNAAF4. Interacts with DNAAF6/PIH1D3. In terms of tissue distribution, expressed in nearly all organs of adult, with higher expression in tissues known to have motile cilia and flagella, such as brain and testis.

The protein localises to the cytoplasm. It localises to the dynein axonemal particle. In terms of biological role, required for cytoplasmic pre-assembly of axonemal dyneins, thereby playing a central role in motility in cilia and flagella. Involved in pre-assembly of dynein arm complexes in the cytoplasm before intraflagellar transport loads them for the ciliary compartment. The polypeptide is Protein kintoun (Mus musculus (Mouse)).